Consider the following 260-residue polypeptide: Adenosylcobinamide-GDP ribazoletransferase (260 aa).

Transmembrane regions (helical) follow at residues 43 to 63 (LVGT…QFIF), 64 to 84 (PASV…GGFH), 117 to 137 (GSLA…ELAL), 143 to 163 (VAGG…SIIF), 197 to 217 (VICL…TLFV), and 237 to 257 (TLGA…LLLW).

This sequence belongs to the CobS family. It depends on Mg(2+) as a cofactor.

It is found in the cell inner membrane. It carries out the reaction alpha-ribazole + adenosylcob(III)inamide-GDP = adenosylcob(III)alamin + GMP + H(+). The enzyme catalyses alpha-ribazole 5'-phosphate + adenosylcob(III)inamide-GDP = adenosylcob(III)alamin 5'-phosphate + GMP + H(+). Its pathway is cofactor biosynthesis; adenosylcobalamin biosynthesis; adenosylcobalamin from cob(II)yrinate a,c-diamide: step 7/7. Functionally, joins adenosylcobinamide-GDP and alpha-ribazole to generate adenosylcobalamin (Ado-cobalamin). Also synthesizes adenosylcobalamin 5'-phosphate from adenosylcobinamide-GDP and alpha-ribazole 5'-phosphate. This chain is Adenosylcobinamide-GDP ribazoletransferase, found in Shewanella amazonensis (strain ATCC BAA-1098 / SB2B).